The primary structure comprises 864 residues: DNA mismatch repair protein MutS (864 aa).

607–614 provides a ligand contact to ATP; the sequence is GPNMGGKS.

This sequence belongs to the DNA mismatch repair MutS family.

In terms of biological role, this protein is involved in the repair of mismatches in DNA. It is possible that it carries out the mismatch recognition step. This protein has a weak ATPase activity. The sequence is that of DNA mismatch repair protein MutS from Neisseria gonorrhoeae (strain NCCP11945).